The following is a 516-amino-acid chain: GMP synthase [glutamine-hydrolyzing] (516 aa).

The Glutamine amidotransferase type-1 domain occupies 7–199 (KIIILDFGSQ…VFGLCKCQAT (193 aa)). Catalysis depends on Cys-84, which acts as the Nucleophile. Catalysis depends on residues His-173 and Glu-175. A GMPS ATP-PPase domain is found at 200-391 (WTMQGFIESN…LGLPDEAVHR (192 aa)). Position 227 to 233 (227 to 233 (SGGVDSS)) interacts with ATP.

As to quaternary structure, homodimer.

The enzyme catalyses XMP + L-glutamine + ATP + H2O = GMP + L-glutamate + AMP + diphosphate + 2 H(+). It participates in purine metabolism; GMP biosynthesis; GMP from XMP (L-Gln route): step 1/1. Catalyzes the synthesis of GMP from XMP. This Desulfotalea psychrophila (strain LSv54 / DSM 12343) protein is GMP synthase [glutamine-hydrolyzing].